Reading from the N-terminus, the 132-residue chain is Large ribosomal subunit protein bL19 (132 aa).

Belongs to the bacterial ribosomal protein bL19 family.

In terms of biological role, this protein is located at the 30S-50S ribosomal subunit interface and may play a role in the structure and function of the aminoacyl-tRNA binding site. This Maricaulis maris (strain MCS10) (Caulobacter maris) protein is Large ribosomal subunit protein bL19.